Here is a 122-residue protein sequence, read N- to C-terminus: MIKLRLKRFGKKREASFRLVACNSTSRRDGRPLQELGFYNPRTKETRLDTEALRLRLSQGAQPTDAVRSLLEKGGLIEKTVRPAEVVGKAKQAEARKAAAKNVAKQAAEAKAEETPADNTEA.

This sequence belongs to the bacterial ribosomal protein bS16 family.

The protein is Small ribosomal subunit protein bS16 of Prochlorococcus marinus (strain MIT 9313).